A 123-amino-acid chain; its full sequence is Protein Wnt-7a (123 aa).

The O-palmitoleoyl serine; by PORCN moiety is linked to residue S1. The tract at residues 33–61 is disordered linker; that stretch reads VEPVRTHRNKRPVFLKIKKPLSYRKPMVT. C89 and C104 are disulfide-bonded. Residues N90 and N96 are each glycosylated (N-linked (GlcNAc...) asparagine).

Belongs to the Wnt family. Forms a soluble 1:1 complex with AFM; this prevents oligomerization and is required for prolonged biological activity. The complex with AFM may represent the physiological form in body fluids. Interacts with FZD5. Interacts with PORCN. Palmitoleoylation is required for efficient binding to frizzled receptors. Depalmitoleoylation leads to Wnt signaling pathway inhibition.

It is found in the secreted. The protein localises to the extracellular space. Its subcellular location is the extracellular matrix. Its function is as follows. Ligand for members of the frizzled family of seven transmembrane receptors that functions in the canonical Wnt/beta-catenin signaling pathway. Plays an important role in embryonic development, including dorsal versus ventral patterning during limb development, skeleton development and urogenital tract development. Required for central nervous system (CNS) angiogenesis and blood-brain barrier regulation. The protein is Protein Wnt-7a (WNT-7A) of Alopias vulpinus (Common thresher shark).